The primary structure comprises 445 residues: Gamma-glutamyl phosphate reductase (445 aa).

Belongs to the gamma-glutamyl phosphate reductase family.

The protein resides in the cytoplasm. The enzyme catalyses L-glutamate 5-semialdehyde + phosphate + NADP(+) = L-glutamyl 5-phosphate + NADPH + H(+). It participates in amino-acid biosynthesis; L-proline biosynthesis; L-glutamate 5-semialdehyde from L-glutamate: step 2/2. Catalyzes the NADPH-dependent reduction of L-glutamate 5-phosphate into L-glutamate 5-semialdehyde and phosphate. The product spontaneously undergoes cyclization to form 1-pyrroline-5-carboxylate. In Persephonella marina (strain DSM 14350 / EX-H1), this protein is Gamma-glutamyl phosphate reductase.